Here is a 154-residue protein sequence, read N- to C-terminus: Myoglobin (154 aa).

One can recognise a Globin domain in the interval glycine 2–lysine 148. The residue at position 4 (serine 4) is a Phosphoserine. Nitrite is bound at residue histidine 65. An O2-binding site is contributed by histidine 65. Position 68 is a phosphothreonine (threonine 68). Histidine 94 serves as a coordination point for heme b.

The protein belongs to the globin family. In terms of assembly, monomeric.

It localises to the cytoplasm. It is found in the sarcoplasm. The enzyme catalyses Fe(III)-heme b-[protein] + nitric oxide + H2O = Fe(II)-heme b-[protein] + nitrite + 2 H(+). It catalyses the reaction H2O2 + AH2 = A + 2 H2O. In terms of biological role, monomeric heme protein which primary function is to store oxygen and facilitate its diffusion within muscle tissues. Reversibly binds oxygen through a pentacoordinated heme iron and enables its timely and efficient release as needed during periods of heightened demand. Depending on the oxidative conditions of tissues and cells, and in addition to its ability to bind oxygen, it also has a nitrite reductase activity whereby it regulates the production of bioactive nitric oxide. Under stress conditions, like hypoxia and anoxia, it also protects cells against reactive oxygen species thanks to its pseudoperoxidase activity. This Mesoplodon carlhubbsi (Hubb's beaked whale) protein is Myoglobin (MB).